We begin with the raw amino-acid sequence, 193 residues long: Holliday junction branch migration complex subunit RuvA (193 aa).

Residues 1-64 (MIGRIQGTLV…EDAQQLFGFA (64 aa)) form a domain I region. Positions 65-139 (TETEREAFRQ…GKLAPDLGVA (75 aa)) are domain II. A flexible linker region spans residues 139 to 143 (AGGKP). The segment at 144–193 (QAIETSSEVLQALLALGYSEKEALLALKQIPADTSISDGIRMGLKYLSKA) is domain III.

The protein belongs to the RuvA family. Homotetramer. Forms an RuvA(8)-RuvB(12)-Holliday junction (HJ) complex. HJ DNA is sandwiched between 2 RuvA tetramers; dsDNA enters through RuvA and exits via RuvB. An RuvB hexamer assembles on each DNA strand where it exits the tetramer. Each RuvB hexamer is contacted by two RuvA subunits (via domain III) on 2 adjacent RuvB subunits; this complex drives branch migration. In the full resolvosome a probable DNA-RuvA(4)-RuvB(12)-RuvC(2) complex forms which resolves the HJ.

Its subcellular location is the cytoplasm. The RuvA-RuvB-RuvC complex processes Holliday junction (HJ) DNA during genetic recombination and DNA repair, while the RuvA-RuvB complex plays an important role in the rescue of blocked DNA replication forks via replication fork reversal (RFR). RuvA specifically binds to HJ cruciform DNA, conferring on it an open structure. The RuvB hexamer acts as an ATP-dependent pump, pulling dsDNA into and through the RuvAB complex. HJ branch migration allows RuvC to scan DNA until it finds its consensus sequence, where it cleaves and resolves the cruciform DNA. The chain is Holliday junction branch migration complex subunit RuvA from Polynucleobacter necessarius subsp. necessarius (strain STIR1).